We begin with the raw amino-acid sequence, 498 residues long: Actin-binding protein WASF2 (498 aa).

Disordered stretches follow at residues Lys-173–Trp-203 and Asn-240–Asp-435. A compositionally biased stretch (low complexity) spans Ser-252–Ser-263. A compositionally biased stretch (pro residues) spans Ser-298–Phe-407. The region spanning Ala-436–Val-453 is the WH2 domain. A Phosphoserine modification is found at Ser-474.

This sequence belongs to the SCAR/WAVE family. In terms of assembly, binds actin and the Arp2/3 complex. Interacts with BAIAP2. Component of the WAVE2 complex composed of ABI1, CYFIP1/SRA1, NCKAP1/NAP1 (NCKAP1l/HEM1 in hematopoietic cells) and WASF2/WAVE2. Directly interacts with BRK1. Interacts with FNBP1L (via the SH3 domain). (Microbial infection) Interacts with human cytomegalovirus protein UL135. As to expression, expressed in all tissues with strongest expression in placenta, lung, and peripheral blood leukocytes, but not in skeletal muscle.

Its subcellular location is the cytoplasm. The protein resides in the cytoskeleton. It is found in the cell projection. It localises to the lamellipodium. The protein localises to the basolateral cell membrane. Functionally, downstream effector molecule involved in the transmission of signals from tyrosine kinase receptors and small GTPases to the actin cytoskeleton. Promotes formation of actin filaments. Part of the WAVE complex that regulates lamellipodia formation. The WAVE complex regulates actin filament reorganization via its interaction with the Arp2/3 complex. The protein is Actin-binding protein WASF2 of Homo sapiens (Human).